Consider the following 73-residue polypeptide: Small ribosomal subunit protein bS18c (73 aa).

This sequence belongs to the bacterial ribosomal protein bS18 family. Part of the 30S ribosomal subunit.

It localises to the plastid. Its subcellular location is the chloroplast. The sequence is that of Small ribosomal subunit protein bS18c (rps18) from Guillardia theta (Cryptophyte).